Reading from the N-terminus, the 245-residue chain is Uridylate kinase (245 aa).

15–18 contributes to the ATP binding site; the sequence is KLSG. An involved in allosteric activation by GTP region spans residues 23-28; that stretch reads GEEGFG. G57 is a UMP binding site. 2 residues coordinate ATP: G58 and R62. Residues D77 and 138-145 each bind UMP; that span reads TGNPFCTT. T165, Y171, and D174 together coordinate ATP.

Belongs to the UMP kinase family. As to quaternary structure, homohexamer.

The protein resides in the cytoplasm. It carries out the reaction UMP + ATP = UDP + ADP. It participates in pyrimidine metabolism; CTP biosynthesis via de novo pathway; UDP from UMP (UMPK route): step 1/1. Its activity is regulated as follows. Allosterically activated by GTP. Inhibited by UTP. Catalyzes the reversible phosphorylation of UMP to UDP. The sequence is that of Uridylate kinase from Shewanella putrefaciens (strain CN-32 / ATCC BAA-453).